Reading from the N-terminus, the 832-residue chain is WD repeat-containing protein 75 (832 aa).

13 WD repeats span residues 4–43 (QCQIRVVRSGGSKLDYRRSVFSADGKYLICVSGDFIKVYS), 47–86 (EECIHALQGHRKLVTGIELNPKNHLQLYSCSLDGTIKLWD), 90–131 (GILI…QLVS), 145–184 (KEISVIIEDVSHLPKCTAIGRQCLYVASVKGVHLSIYYFK), 193–230 (LKATSKKGANNIFTVVACHPSEDCIATGHMDGRIRLWR), 236–275 (KEYTYTSLHWHHDSVMDLAFSAQGTKLLSGGVESVLVQWP), 278–317 (SEEKKEFLPRLGAAIEHISVSPHGTLYCTSHTDNKISIID), 323–361 (SGIIQGLLKGTVVKTGLIVDPRSNALVLNGKPGHLQFYS), 375–424 (QQEF…KLWE), 431–477 (SFVL…KVWM), 490–528 (SWLCDFVGGYHKNQATNCCFSEDGSLLAVSFDEIITVWE), 532–572 (WDLK…CCWN), and 577–614 (ALEWRAQLDATVLQPDPLSENIAVVSCSKRWSNLFLFQ). The disordered stretch occupies residues 764–798 (SQSTEESKEDEEMKSEHSEADSSDETEEMESQKRF).

In terms of assembly, component of the proposed t-UTP subcomplex of the ribosomal small subunit (SSU) processome. SSU processome is composed of more than 70 proteins and the RNA chaperone small nucleolar RNA (snoRNA) U3.

The protein localises to the nucleus. The protein resides in the nucleolus. Functionally, ribosome biogenesis factor. Part of the small subunit (SSU) processome, first precursor of the small eukaryotic ribosomal subunit. During the assembly of the SSU processome in the nucleolus, many ribosome biogenesis factors, an RNA chaperone and ribosomal proteins associate with the nascent pre-rRNA and work in concert to generate RNA folding, modifications, rearrangements and cleavage as well as targeted degradation of pre-ribosomal RNA by the RNA exosome. Involved in nucleolar processing of pre-18S ribosomal RNA. Required for optimal pre-ribosomal RNA transcription by RNA polymerase I. The protein is WD repeat-containing protein 75 (wdr75) of Xenopus laevis (African clawed frog).